Reading from the N-terminus, the 66-residue chain is Potassium channel toxin alpha-KTx 30.3 (66 aa).

A signal peptide spans 1–24 (MNKTFFLVVIMATVLVLAFDATDA). 3 disulfides stabilise this stretch: C30–C50, C36–C55, and C40–C57.

The protein belongs to the short scorpion toxin superfamily. Potassium channel inhibitor family. Alpha-KTx 30 subfamily. Expressed by the venom gland.

Its subcellular location is the secreted. Functionally, inhibits Kv1.3/KCNA3 channel. This chain is Potassium channel toxin alpha-KTx 30.3, found in Scorpiops jendeki (Scorpion).